The primary structure comprises 112 residues: Colipase (112 aa).

Residues 1-17 form the signal peptide; that stretch reads MEKILVLLLVALAVVYA. A propeptide spans 18–22 (enterostatin, activation peptide); sequence VPDPR. 5 disulfides stabilise this stretch: Cys-34-Cys-45, Cys-40-Cys-56, Cys-44-Cys-78, Cys-66-Cys-86, and Cys-80-Cys-104.

It belongs to the colipase family. As to quaternary structure, forms a 1:1 stoichiometric complex with pancreatic lipase. As to expression, expressed by the pancreas.

It is found in the secreted. Its function is as follows. Colipase is a cofactor of pancreatic lipase. It allows the lipase to anchor itself to the lipid-water interface. Without colipase the enzyme is washed off by bile salts, which have an inhibitory effect on the lipase. Enterostatin has a biological activity as a satiety signal. The sequence is that of Colipase (CLPS) from Canis lupus familiaris (Dog).